A 420-amino-acid polypeptide reads, in one-letter code: RING finger protein 39 (420 aa).

The RING-type zinc finger occupies 88–135; it reads CPLCGGSFEDPVLLACEHSFCRACLARRWGTPPATGTEASPTACPCCG. Residues 210–420 form the B30.2/SPRY domain; sequence DDLPEDYPVV…APLRIVPAES (211 aa).

As to expression, expressed in testis.

Its subcellular location is the cytoplasm. The enzyme catalyses S-ubiquitinyl-[E2 ubiquitin-conjugating enzyme]-L-cysteine + [acceptor protein]-L-lysine = [E2 ubiquitin-conjugating enzyme]-L-cysteine + N(6)-ubiquitinyl-[acceptor protein]-L-lysine.. It participates in protein modification; protein ubiquitination. Functionally, plays an inhibitory role in anti-RNA viral innate immunity by targeting the adapter DDX3X and promoting its 'Lys-48'-linked polyubiquitination. Alternatively, enhances the cGAS-STING pathway activation by promoting 'Lys-63'-linked ubiquitination of STING1, facilitating the STING1-TBK1 complex formation and STING1 activation. Its function is as follows. (Microbial infection) Plays a positive role in human immunodeficiency virus (HIV-1) replication. This is RING finger protein 39 (RNF39) from Homo sapiens (Human).